Reading from the N-terminus, the 1341-residue chain is DNA-directed RNA polymerase subunit beta (1341 aa).

Belongs to the RNA polymerase beta chain family. As to quaternary structure, the RNAP catalytic core consists of 2 alpha, 1 beta, 1 beta' and 1 omega subunit. When a sigma factor is associated with the core the holoenzyme is formed, which can initiate transcription.

The enzyme catalyses RNA(n) + a ribonucleoside 5'-triphosphate = RNA(n+1) + diphosphate. In terms of biological role, DNA-dependent RNA polymerase catalyzes the transcription of DNA into RNA using the four ribonucleoside triphosphates as substrates. The sequence is that of DNA-directed RNA polymerase subunit beta from Pseudoalteromonas translucida (strain TAC 125).